A 245-amino-acid chain; its full sequence is Thiopurine S-methyltransferase (245 aa).

The residue at position 14 (S14) is a Phosphoserine. 29-40 (WQDKWVNGNTAF) is a binding site for S-adenosyl-L-methionine. F40 lines the substrate pocket. K58 is subject to N6-acetyllysine. Residues L69, E90, 134-135 (SI), and R152 each bind S-adenosyl-L-methionine.

This sequence belongs to the class I-like SAM-binding methyltransferase superfamily. TPMT family. In terms of assembly, monomer.

It is found in the cytoplasm. The enzyme catalyses S-adenosyl-L-methionine + a thiopurine = S-adenosyl-L-homocysteine + a thiopurine S-methylether.. The sequence is that of Thiopurine S-methyltransferase (TPMT) from Pongo pygmaeus (Bornean orangutan).